A 533-amino-acid polypeptide reads, in one-letter code: Fimbrial subunit type 1 (533 aa).

The signal sequence occupies residues 1 to 30 (MHSLNTRRGLGLAAAMTLAAGALVAPTGAA). An LPXTG sorting signal motif is present at residues 496–500 (LPLTG). Thr499 is modified (pentaglycyl murein peptidoglycan amidated threonine). Positions 500-533 (GANGVIFLTIAGALLVAGGAVVAYANKRRHVAKH) are cleaved as a propeptide — removed by sortase.

It localises to the secreted. Its subcellular location is the cell wall. It is found in the fimbrium. In terms of biological role, major fimbrial subunit of A.viscosus. The sequence is that of Fimbrial subunit type 1 from Actinomyces viscosus.